Reading from the N-terminus, the 97-residue chain is MAKQTNKTASGTSTQHVKQQNAQASKNNFGTEFGSETNVQEVKQQNAQAAANKSQNAQASKNNFGTEFASETSAQEVRQQNAQAQAKKNQNSGKYQG.

Over residues 1–42 (MAKQTNKTASGTSTQHVKQQNAQASKNNFGTEFGSETNVQEV) the composition is skewed to polar residues. A disordered region spans residues 1–97 (MAKQTNKTAS…KNQNSGKYQG (97 aa)). 2 consecutive repeats follow at residues 23–56 (QASK…KSQN) and 58–91 (QASK…KNQN). Residues 43-63 (KQQNAQAAANKSQNAQASKNN) show a composition bias toward low complexity. The segment covering 69-78 (ASETSAQEVR) has biased composition (polar residues). The segment covering 79-91 (QQNAQAQAKKNQN) has biased composition (low complexity).

The protein belongs to the gamma-type SASP family.

Its function is as follows. SASP are proteins degraded in the first minutes of spore germination and provide amino acids for both new protein synthesis and metabolism. These proteins may be involved in dormant spore's high resistance to UV light. The protein is Small, acid-soluble spore protein gamma-type (sasP-B) of Priestia megaterium (Bacillus megaterium).